The primary structure comprises 876 residues: Alanine--tRNA ligase (876 aa).

4 residues coordinate Zn(2+): histidine 568, histidine 572, cysteine 670, and histidine 674.

It belongs to the class-II aminoacyl-tRNA synthetase family. It depends on Zn(2+) as a cofactor.

It is found in the cytoplasm. The enzyme catalyses tRNA(Ala) + L-alanine + ATP = L-alanyl-tRNA(Ala) + AMP + diphosphate. Functionally, catalyzes the attachment of alanine to tRNA(Ala) in a two-step reaction: alanine is first activated by ATP to form Ala-AMP and then transferred to the acceptor end of tRNA(Ala). Also edits incorrectly charged Ser-tRNA(Ala) and Gly-tRNA(Ala) via its editing domain. The protein is Alanine--tRNA ligase of Geotalea uraniireducens (strain Rf4) (Geobacter uraniireducens).